The chain runs to 672 residues: Spermatid perinuclear RNA-binding protein (672 aa).

The region spanning 5 to 363 (RSFANDDRHV…ALKRPFEDGL (359 aa)) is the DZF domain. The segment at 349-371 (GAGSSALKRPFEDGLGDDKDPNK) is disordered. Residues 357-371 (RPFEDGLGDDKDPNK) are compositionally biased toward basic and acidic residues. Residues 387–453 (DLMNALMRLN…AVKVLQAMGY (67 aa)) enclose the DRBM 1 domain. Basic and acidic residues predominate over residues 467–476 (DEKSDNESKN). A disordered region spans residues 467–514 (DEKSDNESKNDTVSSNSSNNTGNSTTETSSTLEVRTQGPILTASGKNP). A compositionally biased stretch (low complexity) spans 477–497 (DTVSSNSSNNTGNSTTETSST). The 67-residue stretch at 510-576 (SGKNPVMELN…ALAALEKLFS (67 aa)) folds into the DRBM 2 domain. Asymmetric dimethylarginine is present on residues R612 and R617.

In terms of assembly, interacts with EIF2AK2. Associates with microtubules; it is unsure whether such interaction is direct or indirect. Isoform 2 is expressed in spermatocytes (at protein level). Expressed in testis, thymus, ovary, liver, kidney, heart, spleen and brain. Expressed in cortex, dentate gyrus and Purkinje cell layer and granule cells of the cerebellum.

It is found in the cytoplasm. It localises to the cytoskeleton. In terms of biological role, involved in spermatogenesis and sperm function. Plays a role in regulation of cell growth. Binds to double-stranded DNA and RNA. Binds most efficiently to poly(I:C) RNA than to poly(dI:dC) DNA. Also binds to single-stranded poly(G) RNA. Binds non-specifically to the mRNA PRM1 3'-UTR and adenovirus VA RNA. The polypeptide is Spermatid perinuclear RNA-binding protein (Strbp) (Mus musculus (Mouse)).